The chain runs to 431 residues: UDP-N-acetylglucosamine 1-carboxyvinyltransferase (431 aa).

A phosphoenolpyruvate-binding site is contributed by 25-26 (KN). Arg101 is a binding site for UDP-N-acetyl-alpha-D-glucosamine. The active-site Proton donor is Cys125. Cys125 carries the 2-(S-cysteinyl)pyruvic acid O-phosphothioketal modification. UDP-N-acetyl-alpha-D-glucosamine contacts are provided by Asp317 and Ile339.

Belongs to the EPSP synthase family. MurA subfamily.

Its subcellular location is the cytoplasm. The catalysed reaction is phosphoenolpyruvate + UDP-N-acetyl-alpha-D-glucosamine = UDP-N-acetyl-3-O-(1-carboxyvinyl)-alpha-D-glucosamine + phosphate. It functions in the pathway cell wall biogenesis; peptidoglycan biosynthesis. In terms of biological role, cell wall formation. Adds enolpyruvyl to UDP-N-acetylglucosamine. The chain is UDP-N-acetylglucosamine 1-carboxyvinyltransferase from Thermobifida fusca (strain YX).